Consider the following 751-residue polypeptide: Catalase-peroxidase (751 aa).

Residues methionine 1–alanine 12 form the signal peptide. The tryptophyl-tyrosyl-methioninium (Trp-Tyr) (with M-267) cross-link spans tryptophan 91–tyrosine 241. Catalysis depends on histidine 92, which acts as the Proton acceptor. The segment at residues tyrosine 241–methionine 267 is a cross-link (tryptophyl-tyrosyl-methioninium (Tyr-Met) (with W-91)). Histidine 282 is a binding site for heme b.

The protein belongs to the peroxidase family. Peroxidase/catalase subfamily. As to quaternary structure, homodimer or homotetramer. It depends on heme b as a cofactor. In terms of processing, formation of the three residue Trp-Tyr-Met cross-link is important for the catalase, but not the peroxidase activity of the enzyme.

It carries out the reaction H2O2 + AH2 = A + 2 H2O. It catalyses the reaction 2 H2O2 = O2 + 2 H2O. Bifunctional enzyme with both catalase and broad-spectrum peroxidase activity. This is Catalase-peroxidase from Cupriavidus necator (strain ATCC 17699 / DSM 428 / KCTC 22496 / NCIMB 10442 / H16 / Stanier 337) (Ralstonia eutropha).